We begin with the raw amino-acid sequence, 99 residues long: Large ribosomal subunit protein uL23 (99 aa).

The protein belongs to the universal ribosomal protein uL23 family. Part of the 50S ribosomal subunit. Contacts protein L29, and trigger factor when it is bound to the ribosome.

One of the early assembly proteins it binds 23S rRNA. One of the proteins that surrounds the polypeptide exit tunnel on the outside of the ribosome. Forms the main docking site for trigger factor binding to the ribosome. The protein is Large ribosomal subunit protein uL23 of Hydrogenobaculum sp. (strain Y04AAS1).